Here is a 452-residue protein sequence, read N- to C-terminus: Ribosomal L1 domain-containing protein 1 (452 aa).

N-acetylmethionine is present on Met1. Glycyl lysine isopeptide (Lys-Gly) (interchain with G-Cter in SUMO2) cross-links involve residues Lys119 and Lys253. Residues 277–350 are a coiled coil; that stretch reads LRSLRKQELK…QKVTEECEEA (74 aa). The segment at 283–452 is disordered; that stretch reads QELKKRKREN…DKKTKAAHSN (170 aa). Basic and acidic residues predominate over residues 292–301; that stretch reads NAKLKKESKM. Residues 309 to 319 show a composition bias toward polar residues; it reads ATSLLTQSGLA. Over residues 330–341 the composition is skewed to basic residues; that stretch reads QKKKTNKAHKKQ. 5 positions are modified to phosphothreonine: Thr334, Thr344, Thr360, Thr399, and Thr407. A compositionally biased stretch (basic and acidic residues) spans 414-423; the sequence is KDVQEFRKPE. Residues 425–440 are compositionally biased toward polar residues; that stretch reads SSFSTPRKSGKKASNT. Phosphothreonine is present on Thr429. Lys432 carries the N6-acetyllysine modification. Ser433 is modified (phosphoserine).

Belongs to the universal ribosomal protein uL1 family. Highly divergent. Interacts with ING1. Interacts with KPNA7 and KPNA2.

The protein resides in the nucleus. It is found in the nucleolus. Functionally, regulates cellular senescence through inhibition of PTEN translation. Acts as a pro-apoptotic regulator in response to DNA damage. This Mus musculus (Mouse) protein is Ribosomal L1 domain-containing protein 1.